The primary structure comprises 163 residues: Peptide methionine sulfoxide reductase MsrA (163 aa).

C10 is an active-site residue.

The protein belongs to the MsrA Met sulfoxide reductase family.

The catalysed reaction is L-methionyl-[protein] + [thioredoxin]-disulfide + H2O = L-methionyl-(S)-S-oxide-[protein] + [thioredoxin]-dithiol. The enzyme catalyses [thioredoxin]-disulfide + L-methionine + H2O = L-methionine (S)-S-oxide + [thioredoxin]-dithiol. In terms of biological role, has an important function as a repair enzyme for proteins that have been inactivated by oxidation. Catalyzes the reversible oxidation-reduction of methionine sulfoxide in proteins to methionine. This chain is Peptide methionine sulfoxide reductase MsrA, found in Ruthia magnifica subsp. Calyptogena magnifica.